The primary structure comprises 159 residues: UPF0260 protein Avi_1324 (159 aa).

It belongs to the UPF0260 family.

This Allorhizobium ampelinum (strain ATCC BAA-846 / DSM 112012 / S4) (Agrobacterium vitis (strain S4)) protein is UPF0260 protein Avi_1324.